The following is a 308-amino-acid chain: D-alanine--D-alanine ligase (308 aa).

The ATP-grasp domain maps to K104–E301. Residue I130 to T185 participates in ATP binding. Residues D255, E268, and N270 each contribute to the Mg(2+) site.

It belongs to the D-alanine--D-alanine ligase family. Requires Mg(2+) as cofactor. Mn(2+) is required as a cofactor.

The protein resides in the cytoplasm. The enzyme catalyses 2 D-alanine + ATP = D-alanyl-D-alanine + ADP + phosphate + H(+). Its pathway is cell wall biogenesis; peptidoglycan biosynthesis. Its function is as follows. Cell wall formation. The polypeptide is D-alanine--D-alanine ligase (Acinetobacter baumannii (strain ACICU)).